The chain runs to 269 residues: tRNA pseudouridine synthase A (269 aa).

Residue Asp-52 is the Nucleophile of the active site. Tyr-110 is a binding site for substrate.

It belongs to the tRNA pseudouridine synthase TruA family. Homodimer.

The enzyme catalyses uridine(38/39/40) in tRNA = pseudouridine(38/39/40) in tRNA. In terms of biological role, formation of pseudouridine at positions 38, 39 and 40 in the anticodon stem and loop of transfer RNAs. The sequence is that of tRNA pseudouridine synthase A from Bacteroides thetaiotaomicron (strain ATCC 29148 / DSM 2079 / JCM 5827 / CCUG 10774 / NCTC 10582 / VPI-5482 / E50).